A 474-amino-acid polypeptide reads, in one-letter code: 3-isopropylmalate dehydratase large subunit (474 aa).

The interval 293 to 313 is disordered; the sequence is GTTPGQGIGITEEIPAPEDLP. Cys348, Cys408, and Cys411 together coordinate [4Fe-4S] cluster.

This sequence belongs to the aconitase/IPM isomerase family. LeuC type 1 subfamily. As to quaternary structure, heterodimer of LeuC and LeuD. The cofactor is [4Fe-4S] cluster.

The enzyme catalyses (2R,3S)-3-isopropylmalate = (2S)-2-isopropylmalate. Its pathway is amino-acid biosynthesis; L-leucine biosynthesis; L-leucine from 3-methyl-2-oxobutanoate: step 2/4. Catalyzes the isomerization between 2-isopropylmalate and 3-isopropylmalate, via the formation of 2-isopropylmaleate. In Natronomonas pharaonis (strain ATCC 35678 / DSM 2160 / CIP 103997 / JCM 8858 / NBRC 14720 / NCIMB 2260 / Gabara) (Halobacterium pharaonis), this protein is 3-isopropylmalate dehydratase large subunit.